We begin with the raw amino-acid sequence, 292 residues long: Light-independent protochlorophyllide reductase iron-sulfur ATP-binding protein (292 aa).

ATP contacts are provided by residues 10–15 and Lys39; that span reads GIGKST. Ser14 contributes to the Mg(2+) binding site. A [4Fe-4S] cluster-binding site is contributed by Cys95. 182-183 contributes to the ATP binding site; the sequence is NR.

Belongs to the NifH/BchL/ChlL family. In terms of assembly, homodimer. Protochlorophyllide reductase is composed of three subunits; ChlL, ChlN and ChlB. The cofactor is [4Fe-4S] cluster.

It is found in the plastid. The protein localises to the chloroplast. It catalyses the reaction chlorophyllide a + oxidized 2[4Fe-4S]-[ferredoxin] + 2 ADP + 2 phosphate = protochlorophyllide a + reduced 2[4Fe-4S]-[ferredoxin] + 2 ATP + 2 H2O. The protein operates within porphyrin-containing compound metabolism; chlorophyll biosynthesis (light-independent). Component of the dark-operative protochlorophyllide reductase (DPOR) that uses Mg-ATP and reduced ferredoxin to reduce ring D of protochlorophyllide (Pchlide) to form chlorophyllide a (Chlide). This reaction is light-independent. The L component serves as a unique electron donor to the NB-component of the complex, and binds Mg-ATP. In Huperzia lucidula (Shining clubmoss), this protein is Light-independent protochlorophyllide reductase iron-sulfur ATP-binding protein.